A 298-amino-acid chain; its full sequence is Mitochondrial 2-oxodicarboxylate carrier (298 aa).

Solcar repeat units lie at residues His-10–Phe-99, Ser-106–Ile-195, and Leu-204–Trp-293. The next 6 membrane-spanning stretches (helical) occupy residues Val-16–Val-36, Phe-69–Val-88, Leu-112–Val-132, Gly-166–Phe-186, Leu-204–Asn-224, and Leu-276–Glu-296.

This sequence belongs to the mitochondrial carrier (TC 2.A.29) family.

It localises to the mitochondrion inner membrane. It catalyses the reaction 2-oxoadipate(in) + 2-oxoglutarate(out) = 2-oxoadipate(out) + 2-oxoglutarate(in). The enzyme catalyses hexanedioate(in) + 2-oxoglutarate(out) = hexanedioate(out) + 2-oxoglutarate(in). It carries out the reaction L-2-aminoadipate(in) + 2-oxoglutarate(out) = L-2-aminoadipate(out) + 2-oxoglutarate(in). The catalysed reaction is glutarate(in) + 2-oxoglutarate(out) = glutarate(out) + 2-oxoglutarate(in). It catalyses the reaction 2-oxoheptanedioate(in) + 2-oxoglutarate(out) = 2-oxoheptanedioate(out) + 2-oxoglutarate(in). The enzyme catalyses heptanedioate(in) + 2-oxoglutarate(out) = heptanedioate(out) + 2-oxoglutarate(in). It carries out the reaction citrate(in) + 2-oxoglutarate(out) = citrate(out) + 2-oxoglutarate(in). Its function is as follows. Transports dicarboxylates across the inner membranes of mitochondria by a counter-exchange mechanism. Can transport 2-oxoadipate (2-oxohexanedioate), 2-oxoglutarate, adipate (hexanedioate), glutarate, and to a lesser extent, pimelate (heptanedioate), 2-oxopimelate (2-oxoheptanedioate), 2-aminoadipate (2-aminohexanedioate), oxaloacetate, and citrate. Plays a central role in catabolism of lysine, hydroxylysine, and tryptophan, by transporting common metabolite intermediates (such as 2-oxoadipate) into the mitochondria, where it is converted into acetyl-CoA and can enter the citric acid (TCA) cycle. In Mus musculus (Mouse), this protein is Mitochondrial 2-oxodicarboxylate carrier (Slc25a21).